Here is a 382-residue protein sequence, read N- to C-terminus: Probable dual-specificity RNA methyltransferase RlmN (382 aa).

Catalysis depends on E118, which acts as the Proton acceptor. The region spanning 124-370 (YDKRVTMCIS…TTVRDTRGSD (247 aa)) is the Radical SAM core domain. The cysteines at positions 131 and 375 are disulfide-linked. C138, C142, and C145 together coordinate [4Fe-4S] cluster. S-adenosyl-L-methionine is bound by residues 196–197 (GE), S230, 253–255 (SLH), and N332. C375 acts as the S-methylcysteine intermediate in catalysis.

The protein belongs to the radical SAM superfamily. RlmN family. Requires [4Fe-4S] cluster as cofactor.

It is found in the cytoplasm. It catalyses the reaction adenosine(2503) in 23S rRNA + 2 reduced [2Fe-2S]-[ferredoxin] + 2 S-adenosyl-L-methionine = 2-methyladenosine(2503) in 23S rRNA + 5'-deoxyadenosine + L-methionine + 2 oxidized [2Fe-2S]-[ferredoxin] + S-adenosyl-L-homocysteine. The catalysed reaction is adenosine(37) in tRNA + 2 reduced [2Fe-2S]-[ferredoxin] + 2 S-adenosyl-L-methionine = 2-methyladenosine(37) in tRNA + 5'-deoxyadenosine + L-methionine + 2 oxidized [2Fe-2S]-[ferredoxin] + S-adenosyl-L-homocysteine. In terms of biological role, specifically methylates position 2 of adenine 2503 in 23S rRNA and position 2 of adenine 37 in tRNAs. The sequence is that of Probable dual-specificity RNA methyltransferase RlmN from Kocuria rhizophila (strain ATCC 9341 / DSM 348 / NBRC 103217 / DC2201).